A 936-amino-acid polypeptide reads, in one-letter code: ABC transporter A family member 5 (936 aa).

The next 7 helical transmembrane spans lie at 34–54 (LIVI…LFDT), 340–360 (ASLI…PVML), 393–413 (FLAI…AIGL), 422–442 (SIQF…AFLV), 454–474 (VAAY…FQFL), 484–501 (WIYI…RGLY), and 527–547 (AMEE…IAAY). An ABC transporter domain is found at 614–851 (IVCDNLKKVY…YGGSYVLTMT (238 aa)). ATP is bound at residue 652 to 659 (GPNGAGKT).

It belongs to the ABC transporter superfamily. ABCA family. CPR flippase (TC 3.A.1.211) subfamily.

The protein resides in the membrane. The protein is ABC transporter A family member 5 (ABCA5) of Arabidopsis thaliana (Mouse-ear cress).